The chain runs to 76 residues: Large ribosomal subunit protein eL20 (76 aa).

The protein belongs to the eukaryotic ribosomal protein eL20 family. As to quaternary structure, part of the 50S ribosomal subunit. Binds 23S rRNA.

The sequence is that of Large ribosomal subunit protein eL20 from Methanococcus vannielii (strain ATCC 35089 / DSM 1224 / JCM 13029 / OCM 148 / SB).